A 525-amino-acid chain; its full sequence is M-phase inducer phosphatase 1 (525 aa).

Positions 1-42 are disordered; that stretch reads MELGPEPPHRRRLLFTCSPTPAPQPTGKVQFGASRAGGLSPV. Residues 74-84 carry the Phosphodegron motif; sequence MGSSESTDSGF. Ser-76 carries the phosphoserine; by CHEK1 modification. Phosphoserine; by NEK11 occurs at positions 79, 82, and 88. A Phosphoserine; by CHEK1 and CHEK2 modification is found at Ser-124. A KEN box motif is present at residues 141–143; sequence KEN. Phosphoserine; by CHEK1 is present on Ser-178. Positions 260–318 are disordered; that stretch reads FDSPSPCSSTSSCSTRAVKRADRSHEESPRGTKRRKSSEASPVKADVPEPTQLPHQSLS. Low complexity predominate over residues 262–274; that stretch reads SPSPCSSTSSCST. Residues 278–289 are compositionally biased toward basic and acidic residues; sequence KRADRSHEESPR. A phosphoserine; by CHEK1 and CHEK2 mark is found at Ser-283 and Ser-296. In terms of domain architecture, Rhodanese spans 377 to 483; that stretch reads LIKEFVIIDC…FFLKCQSHCE (107 aa). Cys-432 is an active-site residue. At Thr-508 the chain carries Phosphothreonine; by CHEK1. Ser-514 and Ser-520 each carry phosphoserine; by PLK3.

It belongs to the MPI phosphatase family. Interacts with CCNB1/cyclin B1. Interacts with YWHAE/14-3-3 epsilon when phosphorylated. Interacts with CUL1 specifically when CUL1 is neddylated and active. Interacts with BTRC/BTRCP1 and FBXW11/BTRCP2. Interactions with CUL1, BTRC and FBXW11 are enhanced upon DNA damage. Interacts with CHEK2; mediates CDC25A phosphorylation and degradation in response to infrared-induced DNA damages. Interacts with HSP90AB1; prevents heat shock-mediated CDC25A degradation and contributes to cell cycle progression. Phosphorylated by CHEK1 on Ser-76, Ser-124, Ser-178, Ser-283, Ser-296 and Thr-508 during checkpoint mediated cell cycle arrest. Also phosphorylated by CHEK2 on Ser-124, Ser-283, and Ser-296 during checkpoint mediated cell cycle arrest. Phosphorylation on Ser-178 and Thr-508 creates binding sites for YWHAE/14-3-3 epsilon which inhibits CDC25A. Phosphorylation on Ser-76, Ser-124, Ser-178, Ser-283 and Ser-296 may also promote ubiquitin-dependent proteolysis of CDC25A by the SCF complex. Phosphorylation of CDC25A at Ser-76 by CHEK1 primes it for subsequent phosphorylation at Ser-79, Ser-82 and Ser-88 by NEK11. Phosphorylation by NEK11 is required for BTRC-mediated polyubiquitination and degradation. Phosphorylation by PIM1 leads to an increase in phosphatase activity. Phosphorylated by PLK3 following DNA damage, leading to promote its ubiquitination and degradation. In terms of processing, ubiquitinated by the anaphase promoting complex/cyclosome (APC/C) ubiquitin ligase complex that contains FZR1/CDH1 during G1 phase leading to its degradation by the proteasome. Ubiquitinated by a SCF complex containing BTRC and FBXW11 during S phase leading to its degradation by the proteasome. Deubiquitination by USP17L2/DUB3 leads to its stabilization.

The catalysed reaction is O-phospho-L-tyrosyl-[protein] + H2O = L-tyrosyl-[protein] + phosphate. With respect to regulation, stimulated by B-type cyclins. Stimulated by PIM1-mediated phosphorylation. In terms of biological role, tyrosine protein phosphatase which functions as a dosage-dependent inducer of mitotic progression. Directly dephosphorylates CDK1 and stimulates its kinase activity. Also dephosphorylates CDK2 in complex with cyclin-E, in vitro. The protein is M-phase inducer phosphatase 1 (Cdc25a) of Rattus norvegicus (Rat).